A 452-amino-acid chain; its full sequence is Ribosomal protein uS12 methylthiotransferase RimO (452 aa).

Residues 5–116 (PTIAFSHLGC…IVDVLQRTES (112 aa)) enclose the MTTase N-terminal domain. Positions 14, 50, 79, 154, 158, and 161 each coordinate [4Fe-4S] cluster. The 230-residue stretch at 140–369 (TTTSAVAYLR…MATQQPIAER (230 aa)) folds into the Radical SAM core domain. One can recognise a TRAM domain in the interval 372–438 (RAQIGRLVDV…IYDLHGEVAS (67 aa)).

The protein belongs to the methylthiotransferase family. RimO subfamily. [4Fe-4S] cluster is required as a cofactor.

The protein resides in the cytoplasm. It catalyses the reaction L-aspartate(89)-[ribosomal protein uS12]-hydrogen + (sulfur carrier)-SH + AH2 + 2 S-adenosyl-L-methionine = 3-methylsulfanyl-L-aspartate(89)-[ribosomal protein uS12]-hydrogen + (sulfur carrier)-H + 5'-deoxyadenosine + L-methionine + A + S-adenosyl-L-homocysteine + 2 H(+). Its function is as follows. Catalyzes the methylthiolation of an aspartic acid residue of ribosomal protein uS12. This is Ribosomal protein uS12 methylthiotransferase RimO from Synechococcus elongatus (strain ATCC 33912 / PCC 7942 / FACHB-805) (Anacystis nidulans R2).